An 83-amino-acid chain; its full sequence is Large ribosomal subunit protein eL43 (83 aa).

Residues C38, C41, C56, and C59 each contribute to the Zn(2+) site. Residues 38–59 form a C4-type zinc finger; it reads CPVCGRRAVKRISTGIWQCTKC.

It belongs to the eukaryotic ribosomal protein eL43 family. Putative zinc-binding subfamily. As to quaternary structure, part of the 50S ribosomal subunit. The cofactor is Zn(2+).

In terms of biological role, binds to the 23S rRNA. This is Large ribosomal subunit protein eL43 from Pyrococcus horikoshii (strain ATCC 700860 / DSM 12428 / JCM 9974 / NBRC 100139 / OT-3).